The chain runs to 157 residues: MFDILMYLFENYIHSEMEVVVDHDELTNELTRAGFRHQEIQKALAWLERLADLQQMETKSYLDVAPQQSTRIYTAAEMTRLDSQSRGFLMYLENLGVLDFATREVVIDRVMELETPNFTLDDLKWVVLMVLFNVPGQEAAYDQMEGLLFEEAEGPLH.

It belongs to the Smg family.

This chain is Protein Smg homolog, found in Idiomarina loihiensis (strain ATCC BAA-735 / DSM 15497 / L2-TR).